A 131-amino-acid chain; its full sequence is Squamosa promoter-binding protein 1 (131 aa).

Residues 1–10 (MDTSKGEGKR) are compositionally biased toward basic and acidic residues. The tract at residues 1–52 (MDTSKGEGKRVIKLPGSQEQGEEEDDIGEDSKKTRALTPSGKRASGSTQRSC) is disordered. Residues 49 to 126 (QRSCQVENCA…AGHNERRRKS (78 aa)) form an SBP-type zinc finger. Residues C52, C57, C74, H77, C93, C96, H100, and C112 each coordinate Zn(2+). Residues 109 to 125 (KRSCRRRLAGHNERRRK) carry the Bipartite nuclear localization signal motif.

The protein resides in the nucleus. Functionally, probable transcriptional factor. Binds to the promoter of the SQUAMOSA gene. The polypeptide is Squamosa promoter-binding protein 1 (SBP1) (Antirrhinum majus (Garden snapdragon)).